The chain runs to 169 residues: MAGKKVKSNTPKQDLSVSKSKLTSIKAPAAAIKAKAAASAVKKGVSNKSTRKVRTSVIFRRPVTLNNPKKPAYPRRSVNKITKMDQFRILKAPLTTESATQKIEGSNTITFMVDMFANKSQVADAVAKMYDVKVKRVNTLITPRGEKKAFVTLSPEFEAADVANKIGLI.

The tract at residues 1–20 (MAGKKVKSNTPKQDLSVSKS) is disordered. Over residues 8-20 (SNTPKQDLSVSKS) the composition is skewed to polar residues.

This sequence belongs to the universal ribosomal protein uL23 family.

This protein binds to a specific region on the 26S rRNA. In Dictyostelium discoideum (Social amoeba), this protein is Large ribosomal subunit protein uL23 (rpl23a).